The chain runs to 352 residues: Putative conjugal transfer protein MT3759 (352 aa).

160-167 (GGTGAGKT) provides a ligand contact to ATP.

This sequence belongs to the GSP E family.

The protein resides in the cytoplasm. The chain is Putative conjugal transfer protein MT3759 from Mycobacterium tuberculosis (strain CDC 1551 / Oshkosh).